A 705-amino-acid chain; its full sequence is Dolichyl-diphosphooligosaccharide--protein glycosyltransferase subunit STT3A (705 aa).

Topologically, residues 1–17 (MTKFGFLRLSYEKQDTL) are cytoplasmic. Residues 18–38 (LKLLILSMAAVLSFSTRLFAV) traverse the membrane as a helical segment. The Lumenal segment spans residues 39-119 (LRFESVIHEF…IDIRNVCVFL (81 aa)). The DXD motif 1 motif lies at 47-49 (EFD). D49 contributes to the Mn(2+) binding site. A helical membrane pass occupies residues 120-138 (APLFSSFTTIVTYHLTKEL). Topologically, residues 139 to 140 (KD) are cytoplasmic. A helical membrane pass occupies residues 141-158 (AGAGLLAAAMIAVVPGYI). Residues 159–169 (SRSVAGSYDNE) are Lumenal-facing. Residues D167 and E169 each contribute to the Mn(2+) site. The short motif at 167-169 (DNE) is the DXD motif 2 element. A helical membrane pass occupies residues 170–189 (GIAIFCMLLTYYMWIKAVKT). Over 190–191 (GS) the chain is Cytoplasmic. Residues 192–206 (ICWAAKCALAYFYMV) form a helical membrane-spanning segment. The Lumenal portion of the chain corresponds to 207-211 (SSWGG). A helical membrane pass occupies residues 212-228 (YVFLINLIPLHVLVLML). The Cytoplasmic segment spans residues 229 to 233 (TGRFS). Residues 234–259 (HRIYVAYCTVYCLGTILSMQISFVGF) form a helical membrane-spanning segment. Residues 260–267 (QPVLSSEH) are Lumenal-facing. A helical transmembrane segment spans residues 268–287 (MAAFGVFGLCQIHAFVDYLR). The Cytoplasmic portion of the chain corresponds to 288–300 (SKLNPQQFEVLFR). The helical transmembrane segment at 301-321 (SVISLVGFVLLTVGALLMLTG) threads the bilayer. Over 322–356 (KISPWTGRFYSLLDPSYAKNNIPIIASVSEHQPTT) the chain is Lumenal. The short motif at 348–351 (SVSE) is the SVSE motif element. A helical transmembrane segment spans residues 357-379 (WSSYYFDLQLLVFMFPVGLYYCF). The Cytoplasmic portion of the chain corresponds to 380–385 (SNLSDA). A helical transmembrane segment spans residues 386-402 (RIFIIMYGVTSMYFSAV). At 403–406 (MVRL) the chain is on the lumenal side. Position 405 (R405) interacts with dolichyl diphosphooligosaccharide. A helical membrane pass occupies residues 407–428 (MLVLAPVMCILSGIGVSQVLST). The Cytoplasmic portion of the chain corresponds to 429 to 453 (YMKNLDISRPDKKSKKQQDSTYPIK). The helical transmembrane segment at 454–473 (NEVASGMILVMAFFLITYTF) threads the bilayer. Residues 474-705 (HSTWVTSEAY…DLDNRGLSRT (232 aa)) are Lumenal-facing. The interacts with target acceptor peptide in protein substrate stretch occupies residues 525–527 (WWD). Positions 525 to 529 (WWDYG) match the WWDYG motif motif. A dolichyl diphosphooligosaccharide-binding site is contributed by Y530. Residues N537 and N544 are each glycosylated (N-linked (GlcNAc...) asparagine). An N-linked (GlcNAc...) (high mannose) asparagine glycan is attached at N548. The DK motif signature appears at 592–599 (DINKFLWM).

The protein belongs to the STT3 family. Component of the oligosaccharyltransferase (OST) complex. There are 2 OST complexes, OST-A and OST-B, which contain STT3A or STT3B as catalytic subunit, respectively. OST-A and OST-B contain common core subunits RPN1, RPN2, OST48, OST4, DAD1 and TMEM258, and OST-A contains DC2/OSTC and KRTCAP2/KCP2 specific accessory subunits. OST-A complex assembly occurs through the formation of 3 subcomplexes. Subcomplex 1 contains RPN1 and TMEM258, subcomplex 2 contains the OST-A-specific subunits STT3A, DC2/OSTC, and KCP2 as well as the core subunit OST4, and subcomplex 3 contains RPN2, DAD1, and OST48. The OST-A complex can form stable complexes with the Sec61 complex or with both the Sec61 and TRAP complexes. Mg(2+) is required as a cofactor. The cofactor is Mn(2+). Expressed at high levels in placenta, liver, muscle and pancreas, and at very low levels in brain, lung and kidney. Expressed in skin fibroblasts (at protein level).

It localises to the endoplasmic reticulum. Its subcellular location is the endoplasmic reticulum membrane. It catalyses the reaction a di-trans,poly-cis-dolichyl diphosphooligosaccharide + L-asparaginyl-[protein] = N(4)-(oligosaccharide-(1-&gt;4)-N-acetyl-beta-D-glucosaminyl-(1-&gt;4)-N-acetyl-beta-D-glucosaminyl)-L-asparaginyl-[protein] + a di-trans,poly-cis-dolichyl diphosphate + H(+). It functions in the pathway protein modification; protein glycosylation. Its activity is regulated as follows. STT3A, but not STT3B, is specifically inhibited by the N-glycosylation inhibitor NGI-235, which prevents productive binding pose of the glycan donor in the active site of STT3A. Functionally, catalytic subunit of the oligosaccharyl transferase (OST) complex that catalyzes the initial transfer of a defined glycan (Glc(3)Man(9)GlcNAc(2) in eukaryotes) from the lipid carrier dolichol-pyrophosphate to an asparagine residue within an Asn-X-Ser/Thr consensus motif in nascent polypeptide chains, the first step in protein N-glycosylation. N-glycosylation occurs cotranslationally and the complex associates with the Sec61 complex at the channel-forming translocon complex that mediates protein translocation across the endoplasmic reticulum (ER). All subunits are required for a maximal enzyme activity. This subunit contains the active site and the acceptor peptide and donor lipid-linked oligosaccharide (LLO) binding pockets. STT3A is present in the majority of OST complexes and mediates cotranslational N-glycosylation of most sites on target proteins, while STT3B-containing complexes are required for efficient post-translational glycosylation and mediate glycosylation of sites that have been skipped by STT3A. STT3A-containing OST-A complex is also required to prevent hyperglycosylation of some target proteins by preventing glycosylation of facultative sites before folding of target proteins is completed. The polypeptide is Dolichyl-diphosphooligosaccharide--protein glycosyltransferase subunit STT3A (Homo sapiens (Human)).